The following is a 315-amino-acid chain: Olfactory receptor 52R1 (315 aa).

The Extracellular portion of the chain corresponds to 1–28 (MVLASGNSSSHPVSFILLGIPGLESFQL). The N-linked (GlcNAc...) asparagine glycan is linked to Asn-7. A helical transmembrane segment spans residues 29–49 (WIAFPFCATYAVAVVGNITLL). The Cytoplasmic portion of the chain corresponds to 50–57 (HVIRIDHT). Residues 58–78 (LHEPMYLFLAMLAITDLVLSS) form a helical membrane-spanning segment. At 79-102 (STQPKMLAIFWFHAHEIQYHACLI) the chain is on the extracellular side. Cys-100 and Cys-192 form a disulfide bridge. Residues 103–123 (QVFFIHAFSSVESGVLMAMAL) form a helical membrane-spanning segment. The Cytoplasmic segment spans residues 124–142 (DCYVAICFPLRHSSILTPS). The chain crosses the membrane as a helical span at residues 143–163 (VVIKLGTIVMLRGLLWVSPFC). The Extracellular portion of the chain corresponds to 164 to 199 (FMVSRMPFCQHQAIPQSYCEHMAVLKLVCADTSISR). Residues 200–220 (GNGLFVAFSVAGFDMIVIGMS) form a helical membrane-spanning segment. Residues 221–240 (YVMILRAVLQLPSGEARLKA) are Cytoplasmic-facing. A helical transmembrane segment spans residues 241 to 261 (FSTRSSHICVILALYIPALFS). Residues 262 to 276 (FLTYRFGHDVPRVVH) are Extracellular-facing. A helical membrane pass occupies residues 277-297 (ILFANLYLLIPPMLNPIIYGV). Residues 298 to 315 (RTKQIGDRVIQGCCGNIP) are Cytoplasmic-facing.

This sequence belongs to the G-protein coupled receptor 1 family.

Its subcellular location is the cell membrane. In terms of biological role, odorant receptor. This is Olfactory receptor 52R1 (OR52R1) from Homo sapiens (Human).